A 503-amino-acid polypeptide reads, in one-letter code: Ell-associated factor Eaf (503 aa).

Polar residues-rich tracts occupy residues 119 to 145 (TRNE…NQGA) and 167 to 186 (ENST…SRRN). Disordered stretches follow at residues 119–220 (TRNE…PAWD), 250–360 (GHAN…SQSV), and 372–503 (GGVL…DDDD). Ser196 carries the phosphoserine modification. Positions 202–215 (SPSRPVPVHRSPQS) are enriched in low complexity. 2 stretches are compositionally biased toward polar residues: residues 250–273 (GHAN…STHI) and 298–307 (MAQQQQQHPS). The segment covering 308 to 337 (NYGRGYNGGHNHAQQQQQQQRNSPPRQRPS) has biased composition (low complexity). The span at 385–400 (DSSDSDSGSDSDDSTE) shows a compositional bias: acidic residues. Composition is skewed to low complexity over residues 406-437 (QGQQ…HHNQ), 454-472 (HQQQ…QKQQ), and 487-497 (LQNDLQLSSNS).

The protein belongs to the EAF family.

The protein localises to the nucleus. In terms of biological role, promotes transcriptional elongation by Su(Tpl)/ELL. Essential for development. This Drosophila sechellia (Fruit fly) protein is Ell-associated factor Eaf.